Reading from the N-terminus, the 65-residue chain is Large ribosomal subunit protein bL32 (65 aa).

Belongs to the bacterial ribosomal protein bL32 family.

The sequence is that of Large ribosomal subunit protein bL32 from Phytoplasma australiense.